Here is a 128-residue protein sequence, read N- to C-terminus: Large ribosomal subunit protein bL17 (128 aa).

This sequence belongs to the bacterial ribosomal protein bL17 family. In terms of assembly, part of the 50S ribosomal subunit. Contacts protein L32.

The chain is Large ribosomal subunit protein bL17 from Erwinia tasmaniensis (strain DSM 17950 / CFBP 7177 / CIP 109463 / NCPPB 4357 / Et1/99).